The following is a 308-amino-acid chain: Pantoate--beta-alanine ligase (308 aa).

A propeptide (removed; partial) is located at residue alanine 2.

This sequence belongs to the pantothenate synthetase family. In terms of assembly, homodimer. In terms of tissue distribution, expressed at low levels in leaf and root.

It is found in the cytoplasm. The catalysed reaction is (R)-pantoate + beta-alanine + ATP = (R)-pantothenate + AMP + diphosphate + H(+). It participates in cofactor biosynthesis; (R)-pantothenate biosynthesis; (R)-pantothenate from (R)-pantoate and beta-alanine: step 1/1. The chain is Pantoate--beta-alanine ligase (PANC) from Lotus japonicus (Lotus corniculatus var. japonicus).